The primary structure comprises 40 residues: Photosystem II reaction center protein J (40 aa).

The chain crosses the membrane as a helical span at residues 10 to 30 (LWLVGTVAGTLVIGLLGVFFY).

Belongs to the PsbJ family. PSII is composed of 1 copy each of membrane proteins PsbA, PsbB, PsbC, PsbD, PsbE, PsbF, PsbH, PsbI, PsbJ, PsbK, PsbL, PsbM, PsbT, PsbX, PsbY, PsbZ, Psb30/Ycf12, at least 3 peripheral proteins of the oxygen-evolving complex and a large number of cofactors. It forms dimeric complexes.

The protein localises to the plastid. It is found in the chloroplast thylakoid membrane. In terms of biological role, one of the components of the core complex of photosystem II (PSII). PSII is a light-driven water:plastoquinone oxidoreductase that uses light energy to abstract electrons from H(2)O, generating O(2) and a proton gradient subsequently used for ATP formation. It consists of a core antenna complex that captures photons, and an electron transfer chain that converts photonic excitation into a charge separation. This is Photosystem II reaction center protein J from Adiantum capillus-veneris (Maidenhair fern).